The sequence spans 198 residues: Na(+)-translocating NADH-quinone reductase subunit E (198 aa).

Transmembrane regions (helical) follow at residues 11–31, 35–55, 77–97, 110–130, 140–160, and 176–196; these read SVFIENMALSFFLGMCTFLAV, VSTSFGLGIAVIVVLGIAVPV, FLNFITFIGVIAALVQILEMF, GIFLPLITVNCAIFGGVSFMV, VVYGIGAGTGWMLAIVALAGL, and LGITFITVGLMALGFMSFSGI.

The protein belongs to the NqrDE/RnfAE family. Composed of six subunits; NqrA, NqrB, NqrC, NqrD, NqrE and NqrF.

Its subcellular location is the cell inner membrane. It carries out the reaction a ubiquinone + n Na(+)(in) + NADH + H(+) = a ubiquinol + n Na(+)(out) + NAD(+). NQR complex catalyzes the reduction of ubiquinone-1 to ubiquinol by two successive reactions, coupled with the transport of Na(+) ions from the cytoplasm to the periplasm. NqrA to NqrE are probably involved in the second step, the conversion of ubisemiquinone to ubiquinol. This chain is Na(+)-translocating NADH-quinone reductase subunit E, found in Actinobacillus succinogenes (strain ATCC 55618 / DSM 22257 / CCUG 43843 / 130Z).